Here is a 220-residue protein sequence, read N- to C-terminus: MNHLRLQILDQATCERLLERLANEAEWLDGSLTAGAHAKGGKRNFQINYDSALRKEIHELVERAMWNHPVVKGFCLPRKLHRFLISKTEKEGGYDTHVDNAYMSSGRSDLSFTLSLTDDTMYEGGDLEIDSISESYPIKLKQGEILIYPSTSLHRVCNVTSGIRTVCVGWIESYVQAENDRICLFQLESGARAVLAKHGRSDELDLIFLAYTNLLRRLGG.

Positions 79–173 constitute a Fe2OG dioxygenase domain; it reads KLHRFLISKT…RTVCVGWIES (95 aa). Histidine 97, aspartate 99, and histidine 154 together coordinate Fe cation. Arginine 164 serves as a coordination point for 2-oxoglutarate.

It depends on Fe(2+) as a cofactor. L-ascorbate is required as a cofactor.

This chain is PKHD-type hydroxylase sync_1544, found in Synechococcus sp. (strain CC9311).